The following is a 64-amino-acid chain: Large ribosomal subunit protein bL35 (64 aa).

A disordered region spans residues 1-43; that stretch reads MPKMKSKKSLAKRVIAKKNGTLKRGKAYRSHRATGKTTKQKRH.

Belongs to the bacterial ribosomal protein bL35 family.

This is Large ribosomal subunit protein bL35 from Mesoplasma florum (strain ATCC 33453 / NBRC 100688 / NCTC 11704 / L1) (Acholeplasma florum).